The following is a 189-amino-acid chain: Peptidyl-tRNA hydrolase (189 aa).

Residue tyrosine 14 participates in tRNA binding. The active-site Proton acceptor is the histidine 19. Residues tyrosine 64, asparagine 66, and asparagine 112 each contribute to the tRNA site.

Belongs to the PTH family. In terms of assembly, monomer.

Its subcellular location is the cytoplasm. The catalysed reaction is an N-acyl-L-alpha-aminoacyl-tRNA + H2O = an N-acyl-L-amino acid + a tRNA + H(+). Its function is as follows. Hydrolyzes ribosome-free peptidyl-tRNAs (with 1 or more amino acids incorporated), which drop off the ribosome during protein synthesis, or as a result of ribosome stalling. Catalyzes the release of premature peptidyl moieties from peptidyl-tRNA molecules trapped in stalled 50S ribosomal subunits, and thus maintains levels of free tRNAs and 50S ribosomes. This chain is Peptidyl-tRNA hydrolase, found in Dehalococcoides mccartyi (strain ATCC BAA-2100 / JCM 16839 / KCTC 5957 / BAV1).